Here is a 679-residue protein sequence, read N- to C-terminus: uncharacterized protein (679 aa).

12 helical membrane-spanning segments follow: residues 23-41 (YALR…AYYL), 46-65 (PYWA…GGVI), 72-90 (IAGS…GHTL), 94-113 (WLFL…ACAH), 120-142 (YAFQ…IVEI), 157-179 (IVGI…GTAL), 362-381 (WSGV…SIGA), 385-404 (SGPG…SIVA), 411-433 (SLLM…GLMV), 438-455 (LWQF…MQLL), 462-481 (LAGL…AVTN), and 496-515 (AKIV…RPGS).

It belongs to the aromatic acid exporter ArAE (TC 2.A.85) family.

The protein localises to the cell membrane. This is an uncharacterized protein from Salmonella typhimurium (strain LT2 / SGSC1412 / ATCC 700720).